The following is a 394-amino-acid chain: LL-diaminopimelate aminotransferase (394 aa).

2 residues coordinate substrate: Tyr-14 and Gly-41. Residues Tyr-71, 104–105, Tyr-128, Asn-174, Tyr-205, and 233–235 each bind pyridoxal 5'-phosphate; these read AK and SFS. Residues Lys-105, Tyr-128, and Asn-174 each contribute to the substrate site. Lys-236 is subject to N6-(pyridoxal phosphate)lysine. Residues Arg-244 and Asn-275 each coordinate pyridoxal 5'-phosphate. Substrate-binding residues include Asn-275 and Arg-369.

The protein belongs to the class-I pyridoxal-phosphate-dependent aminotransferase family. LL-diaminopimelate aminotransferase subfamily. Homodimer. It depends on pyridoxal 5'-phosphate as a cofactor.

It catalyses the reaction (2S,6S)-2,6-diaminopimelate + 2-oxoglutarate = (S)-2,3,4,5-tetrahydrodipicolinate + L-glutamate + H2O + H(+). It participates in amino-acid biosynthesis; L-lysine biosynthesis via DAP pathway; LL-2,6-diaminopimelate from (S)-tetrahydrodipicolinate (aminotransferase route): step 1/1. In terms of biological role, involved in the synthesis of meso-diaminopimelate (m-DAP or DL-DAP), required for both lysine and peptidoglycan biosynthesis. Catalyzes the direct conversion of tetrahydrodipicolinate to LL-diaminopimelate. Is also able to use meso-diaminopimelate, cystathionine, lysine or ornithine as substrates. This chain is LL-diaminopimelate aminotransferase, found in Chlamydia trachomatis serovar D (strain ATCC VR-885 / DSM 19411 / UW-3/Cx).